Reading from the N-terminus, the 698-residue chain is Protein SST2 (698 aa).

The fungal-DR stretch occupies residues 10–203 (ELSSKNFSRT…GAKPNVWSPT (194 aa)). At serine 252 the chain carries Phosphoserine. One can recognise a DEP domain in the interval 273 to 358 (SNAGIRLFEN…SRSSFFTLSK (86 aa)). The residue at position 408 (serine 408) is a Phosphoserine. Residues 420–689 (KLDYVLTDPG…TQSDVYKDAS (270 aa)) enclose the RGS domain. Residue serine 539 is modified to Phosphoserine; by MAPK. A disordered region spans residues 545-586 (FPTNLYDPSPASAESAASSISSTEADTLGEPPEVSLKPSKNL). Positions 551-570 (DPSPASAESAASSISSTEAD) are enriched in low complexity. Position 587 is a phosphoserine (serine 587).

In terms of processing, phosphorylated by FUS3 and KSS1.

Its function is as follows. Desensitization to alpha-factor pheromone. Is involved in regulating the signaling pathway for responding to mating pheromone. The protein is Protein SST2 (SST2) of Saccharomyces cerevisiae (strain ATCC 204508 / S288c) (Baker's yeast).